Here is a 321-residue protein sequence, read N- to C-terminus: Beta-1,3-N-acetylglucosaminyltransferase manic fringe (321 aa).

The Cytoplasmic portion of the chain corresponds to 1–7; that stretch reads MQCRLPR. Residues 8-27 form a helical; Signal-anchor for type II membrane protein membrane-spanning segment; it reads GLAGALLTLLCMGLLCLRYH. The Lumenal segment spans residues 28 to 321; sequence LNLSPQRVQG…TPWCPQLGAR (294 aa). R70 is a substrate binding site. An N-linked (GlcNAc...) asparagine glycan is attached at N109. 2 disulfides stabilise this stretch: C110-C121 and C139-C202. Substrate is bound at residue D143. Position 144 (D144) interacts with Mn(2+). Residue N185 is glycosylated (N-linked (GlcNAc...) asparagine). The active site involves D232. Residue H256 coordinates Mn(2+). Cysteines 306 and 315 form a disulfide.

The protein belongs to the glycosyltransferase 31 family. It depends on Mn(2+) as a cofactor.

It is found in the golgi apparatus membrane. It catalyses the reaction 3-O-(alpha-L-fucosyl)-L-threonyl-[EGF-like domain protein] + UDP-N-acetyl-alpha-D-glucosamine = 3-O-(N-acetyl-beta-D-glucosaminyl-(1-&gt;3)-alpha-L-fucosyl)-L-threonyl-[EGF-like domain protein] + UDP + H(+). The enzyme catalyses 3-O-(alpha-L-fucosyl)-L-seryl-[EGF-like domain protein] + UDP-N-acetyl-alpha-D-glucosamine = 3-O-(N-acetyl-beta-D-glucosaminyl-(1-&gt;3)-alpha-L-fucosyl)-L-seryl-[EGF-like domain protein] + UDP + H(+). Functionally, glycosyltransferase that initiates the elongation of O-linked fucose residues attached to EGF-like repeats in the extracellular domain of Notch molecules. Modulates NOTCH1 activity by modifying O-fucose residues at specific EGF-like domains resulting in inhibition of NOTCH1 activation by JAG1 and enhancement of NOTCH1 activation by DLL1 via an increase in its binding to DLL1. This chain is Beta-1,3-N-acetylglucosaminyltransferase manic fringe, found in Homo sapiens (Human).